Here is a 770-residue protein sequence, read N- to C-terminus: Rho guanine nucleotide exchange factor 38 (770 aa).

Residues 33-88 form a disordered region; that stretch reads KTDTVVDSSVSGDHSGSLRRSQSDRTEYNQKLQEKMTPQAECSSAETPTPEDEQQV. Phosphothreonine is present on threonine 34. Residues 37-47 show a composition bias toward low complexity; that stretch reads VVDSSVSGDHS. Residues 53–66 show a composition bias toward basic and acidic residues; it reads SQSDRTEYNQKLQE. The 192-residue stretch at 94–285 folds into the DH domain; it reads KRAKIIRELI…KDINVNINEL (192 aa). One can recognise a BAR domain in the interval 327 to 542; the sequence is LKILTRGESQ…VHSLTFVKEN (216 aa). SH3 domains follow at residues 581 to 644 and 706 to 769; these read GAEE…PHNP and VDEQ…KMTY.

May act as a guanine-nucleotide releasing factor. The chain is Rho guanine nucleotide exchange factor 38 (Arhgef38) from Mus musculus (Mouse).